A 769-amino-acid chain; its full sequence is Cullin-3 (769 aa).

The segment at 614-655 is disordered; the sequence is DRELPSTTSSTTTTTTTATSSSTSTSPSSSSSSISTPTPSKS. The span at 618–653 shows a compositional bias: low complexity; it reads PSTTSSTTTTTTTATSSSTSTSPSSSSSSISTPTPS. Positions 699–761 constitute a Cullin neddylation domain; sequence DRKHQIEASI…REYLERSKQD (63 aa). Residue lysine 713 forms a Glycyl lysine isopeptide (Lys-Gly) (interchain with G-Cter in NEDD8) linkage.

Belongs to the cullin family. Post-translationally, neddylated. Deneddylated via its interaction with the COP9 signalosome (CSN) complex.

The protein resides in the nucleus. It participates in protein modification; protein ubiquitination. Probable core component of cullin-based SCF-like E3 ubiquitin-protein ligase complexes which mediate the ubiquitination and subsequent proteasomal degradation of target proteins. The E3 ubiquitin-protein ligase activity of the complex is dependent on the neddylation of the cullin subunit. The protein is Cullin-3 (culC) of Dictyostelium discoideum (Social amoeba).